A 1489-amino-acid polypeptide reads, in one-letter code: Calmodulin-regulated spectrin-associated protein 2 (1489 aa).

In terms of domain architecture, Calponin-homology (CH) spans 222–335 (WKLVPARYRK…FMAELFWWFE (114 aa)). Residues 375–415 (SSDFPSSGEGATFTQSHHHLPSRYSRPQAHSSASGGIRRSS) form a disordered region. A compositionally biased stretch (low complexity) spans 405–415 (SSASGGIRRSS). Ser-416 and Ser-418 each carry phosphoserine. Thr-426 is subject to Phosphothreonine. Phosphoserine occurs at positions 464, 598, 599, 611, and 673. 2 disordered regions span residues 611–639 (SPIT…EDSS) and 668–730 (TREA…GSEL). A compositionally biased stretch (polar residues) spans 668–679 (TREALSPCPSTV). A Phosphothreonine modification is found at Thr-678. Position 680 is a phosphoserine (Ser-680). The segment covering 680-699 (STKSQPGSSASSSSGVKMTS) has biased composition (low complexity). Positions 703 to 713 (QKFRKLNHTDG) are enriched in basic and acidic residues. Residues 756–793 (LLASEMVHLRMKLEEKRRAIEAQKKKMEAAFTKQRQKM) adopt a coiled-coil conformation. A disordered region spans residues 812-844 (LREEAAGAEDEKVYTDRAKEKESQKTDGQRSKS). Residue Ser-862 is modified to Phosphoserine. Residues 887 to 926 (EILEYTKSIEKLNSSLHFLQQEMQRLSLQQEMLMQMREQQ) are a coiled coil. The MBD region stretch occupies residues 922 to 1034 (MREQQSWVIS…IQTRSFVCFG (113 aa)). The segment at 925-1017 (QQSWVISPPQ…SVDSLPRLRR (93 aa)) is disordered. Residues Ser-931 and Ser-936 each carry the phosphoserine modification. Polar residues predominate over residues 960–989 (SSDSPRPTHPSPQSSNRKSASFSVKSQRTP). 3 positions are modified to phosphothreonine: Thr-997, Thr-1002, and Thr-1004. Phosphoserine is present on residues Ser-1008 and Ser-1019. Disordered regions lie at residues 1032–1078 (CFGD…PFES), 1096–1152 (PNED…DKEQ), and 1191–1349 (KETQ…EYTG). Basic and acidic residues predominate over residues 1039–1075 (PQLKESKPKEEVKKEELESKGTLEQRGHNPEEKEIKP). Residues 1105-1117 (TEPPPKPVFPPTA) are compositionally biased toward pro residues. 2 stretches are compositionally biased toward basic and acidic residues: residues 1132 to 1152 (KPPE…DKEQ) and 1191 to 1252 (KETQ…DTVI). Ser-1148 is subject to Phosphoserine. The stretch at 1166 to 1238 (KDDQKAENDM…REFIRQEYMR (73 aa)) forms a coiled coil. Over residues 1287-1299 (SSLSLASLNTGDN) the composition is skewed to polar residues. Residues Ser-1313, Ser-1319, and Ser-1321 each carry the phosphoserine modification. Residues 1334–1346 (NASTTSSVASGTE) are compositionally biased toward polar residues. Positions 1349-1483 (GPKLYKEPSA…QTKRPVTPKK (135 aa)) constitute a CKK domain.

This sequence belongs to the CAMSAP1 family. Interacts with CAMSAP3. Interacts with KATNA1 and KATNB1; leading to regulate the length of CAMSAP2-decorated microtubule stretches. Interacts with a complex formed by AKAP9 and PDE4DIP isoform 13/MMG8/SMYLE, which recruits CAMSAP2 to the Golgi. Interacts with MAPRE1/EB1.

It is found in the cytoplasm. Its subcellular location is the cytoskeleton. The protein resides in the golgi apparatus. The protein localises to the cilium basal body. Key microtubule-organizing protein that specifically binds the minus-end of non-centrosomal microtubules and regulates their dynamics and organization. Specifically recognizes growing microtubule minus-ends and autonomously decorates and stabilizes microtubule lattice formed by microtubule minus-end polymerization. Acts on free microtubule minus-ends that are not capped by microtubule-nucleating proteins or other factors and protects microtubule minus-ends from depolymerization. In addition, it also reduces the velocity of microtubule polymerization. Through the microtubule cytoskeleton, also regulates the organization of cellular organelles including the Golgi and the early endosomes. Essential for the tethering, but not for nucleation of non-centrosomal microtubules at the Golgi: together with Golgi-associated proteins AKAP9 and PDE4DIP, required to tether non-centrosomal minus-end microtubules to the Golgi, an important step for polarized cell movement. Also acts as a regulator of neuronal polarity and development: localizes to non-centrosomal microtubule minus-ends in neurons and stabilizes non-centrosomal microtubules, which is required for neuronal polarity, axon specification and dendritic branch formation. Through the microtubule cytoskeleton, regulates the autophagosome transport. The sequence is that of Calmodulin-regulated spectrin-associated protein 2 from Homo sapiens (Human).